A 914-amino-acid polypeptide reads, in one-letter code: Translation initiation factor IF-2 (914 aa).

Disordered stretches follow at residues 52-84 (GGGKAAEGAAKAPAKAAAKGDAKTAAKGDVKAP) and 98-326 (AGGN…GVRL). Positions 57 to 68 (AEGAAKAPAKAA) are enriched in low complexity. Over residues 69 to 84 (AKGDAKTAAKGDVKAP) the composition is skewed to basic and acidic residues. The span at 98-138 (AGGNGEAAAPPAQPGGTATTPAAQATPEAPARPGPAAARPS) shows a compositional bias: low complexity. Pro residues-rich tracts occupy residues 139-169 (APAPGQPKPPAPGQPPRPGATPGPRPGPAPK) and 193-207 (PRPVPRPGAPRPGAP). Gly residues predominate over residues 236–296 (RPGGGRPGGP…GAAGAFGRPG (61 aa)). Residues 300-309 (RRGRKSKRQK) are compositionally biased toward basic residues. In terms of domain architecture, tr-type G spans 421-581 (TRPPVVTVMG…AVLLTADAAL (161 aa)). GTP-binding positions include 430–437 (GHVDHGKT), 469–473 (DTPGH), and 523–526 (NKID).

Belongs to the TRAFAC class translation factor GTPase superfamily. Classic translation factor GTPase family. IF-2 subfamily.

The protein resides in the cytoplasm. Functionally, one of the essential components for the initiation of protein synthesis. Protects formylmethionyl-tRNA from spontaneous hydrolysis and promotes its binding to the 30S ribosomal subunits. Also involved in the hydrolysis of GTP during the formation of the 70S ribosomal complex. This chain is Translation initiation factor IF-2, found in Mycobacterium avium (strain 104).